The chain runs to 689 residues: MAIDRRREAAGSGAGRQPAPAEENGSLPPGDAAASAPLGGRAGSGGSAEIQPLPALHPSGGPHSSCCAAAAAPSLLLLDYDGSVLPFLGGLGGGYQKTLVVLTWIPALFIGFSQFSDSFLLDQPNFWCHGAGKGTELAGATVTGRWGDMGNWTSPSATPFSTASWGTTSNRSNSSDTPPLPSPPGKGNNDSNCECHAWDYGIRTGLVQNVVSKWDLVCDNAWKVHVAKFSLLVGLIFGYLITGCIADWVGRRPVLLFSVIFILIFGLTVALSVNVTMFSTLRFFEGFCLAGIILTLYALRIELCPPGKRFIITMVASFVAMAGQFLMPGLAALCRDWQVLQALIICPFLLMLLYWSIFPESLRWLMATQQFESAKKLILYLTQKNCVSPESDIKGVMPELEKELSRRPKKVCIVKVVGTRNLWKNIVVLCVNSLTGYGIHHCFARSMMGHEVKVPLLENFYADYYTMASIALASCLAMCLVVRFLGRRGGLLLFMILTALASLLQLGLLNLIGKYSQHPDSELQLKLAVGMSDSVKDKFSIAFSIVGMFASHAVGSLSVFFCAEITPTVIRCGGLGLVLASAGFGMLTAPIIELHNQKGYFLHHIIFACCTLICIICILLLPESRDQNLPENIANGEHYTRQPLLSHKKGEQPLLLTNAELKDYSGLHDVAAVGDGLSEGATANGMKTM.

2 disordered regions span residues 1–55 and 162–188; these read MAID…PLPA and TASW…GKGN. N24 is a glycosylation site (N-linked (GlcNAc...) asparagine). Residues 165–177 are compositionally biased toward polar residues; the sequence is WGTTSNRSNSSDT. 2 consecutive transmembrane segments (helical) span residues 229-249 and 253-273; these read FSLL…ADWV and PVLL…ALSV. A glycan (N-linked (GlcNAc...) asparagine) is linked at N274. 8 helical membrane passes run 283 to 303, 310 to 330, 339 to 359, 462 to 482, 489 to 509, 541 to 561, 572 to 592, and 601 to 621; these read FFEG…RIEL, FIIT…MPGL, VLQA…SIFP, ADYY…CLVV, GGLL…LGLL, IAFS…SVFF, CGGL…APII, and FLHH…ILLL.

This sequence belongs to the major facilitator (TC 2.A.1) superfamily. Organic cation transporter (TC 2.A.1.19) family. Expressed in many tissues, including brain, spinal cord, kidney, liver, eye, adipose tissue, lung, epididymis, adrenal gland, pineal gland, skeletal muscle, heart, spleen, thymus, ovary, uterus, testis and epididymis.

Its subcellular location is the membrane. This chain is Solute carrier family 22 member 23 (Slc22a23), found in Rattus norvegicus (Rat).